The primary structure comprises 85 residues: Large ribosomal subunit protein bL27 (85 aa).

The protein belongs to the bacterial ribosomal protein bL27 family.

The chain is Large ribosomal subunit protein bL27 from Leptospira biflexa serovar Patoc (strain Patoc 1 / Ames).